The primary structure comprises 149 residues: Protein FAM72B (149 aa).

Belongs to the FAM72 family.

This is Protein FAM72B (FAM72B) from Homo sapiens (Human).